Here is a 43-residue protein sequence, read N- to C-terminus: uncharacterized protein (43 aa).

A signal peptide spans Met1 to Ser16. The N-linked (GlcNAc...) asparagine; by host glycan is linked to Asn37.

This is an uncharacterized protein from Acheta domesticus (House cricket).